Here is a 278-residue protein sequence, read N- to C-terminus: MPIKIVTDSSITIEPGIARELDITIVPLSVTIDGTMYSDDDLKFEDFMVKMAASKNLPKTSQPPVGVFAEVYEKIAAEDDEIISIHLTEALSGTVEAARQGGMLSGRNVTVIDSDFTDQAQKFQVVEAARLAKAGASKEEILEKIKYIRENTELFIGFSTLENLVKGGRVSRMTGLFGSLLQVRVIGTLKDRELNTLLRGRGSKTFYKWLEELSDSISSSGRKIREIGISHAQGLEFSQKAKEVLQKFVEKPISILDTNTTIATHTGPGAWAIMIDYE.

Positions 3–277 constitute a DegV domain; the sequence is IKIVTDSSIT…PGAWAIMIDY (275 aa). Positions 60 and 92 each coordinate hexadecanoate.

In terms of biological role, may bind long-chain fatty acids, such as palmitate, and may play a role in lipid transport or fatty acid metabolism. This Lactococcus lactis subsp. lactis (strain IL1403) (Streptococcus lactis) protein is DegV domain-containing protein YejH (yejH).